The chain runs to 176 residues: Shikimate kinase (176 aa).

Residue 14–19 (GAGKSS) participates in ATP binding. Ser-18 provides a ligand contact to Mg(2+). 3 residues coordinate substrate: Asp-36, Arg-60, and Gly-82. ATP is bound at residue Arg-120. Arg-138 serves as a coordination point for substrate.

It belongs to the shikimate kinase family. As to quaternary structure, monomer. Requires Mg(2+) as cofactor.

Its subcellular location is the cytoplasm. It carries out the reaction shikimate + ATP = 3-phosphoshikimate + ADP + H(+). It functions in the pathway metabolic intermediate biosynthesis; chorismate biosynthesis; chorismate from D-erythrose 4-phosphate and phosphoenolpyruvate: step 5/7. Catalyzes the specific phosphorylation of the 3-hydroxyl group of shikimic acid using ATP as a cosubstrate. The polypeptide is Shikimate kinase (Dehalococcoides mccartyi (strain ATCC BAA-2266 / KCTC 15142 / 195) (Dehalococcoides ethenogenes (strain 195))).